The chain runs to 366 residues: tRNA 2-selenouridine synthase (366 aa).

A Rhodanese domain is found at 12-136; that stretch reads FLSGTPMMDV…MRGFLIDVIE (125 aa). Catalysis depends on Cys-95, which acts as the S-selanylcysteine intermediate.

This sequence belongs to the SelU family. As to quaternary structure, monomer.

It catalyses the reaction 5-methylaminomethyl-2-thiouridine(34) in tRNA + selenophosphate + (2E)-geranyl diphosphate + H2O + H(+) = 5-methylaminomethyl-2-selenouridine(34) in tRNA + (2E)-thiogeraniol + phosphate + diphosphate. The catalysed reaction is 5-methylaminomethyl-2-thiouridine(34) in tRNA + (2E)-geranyl diphosphate = 5-methylaminomethyl-S-(2E)-geranyl-thiouridine(34) in tRNA + diphosphate. It carries out the reaction 5-methylaminomethyl-S-(2E)-geranyl-thiouridine(34) in tRNA + selenophosphate + H(+) = 5-methylaminomethyl-2-(Se-phospho)selenouridine(34) in tRNA + (2E)-thiogeraniol. The enzyme catalyses 5-methylaminomethyl-2-(Se-phospho)selenouridine(34) in tRNA + H2O = 5-methylaminomethyl-2-selenouridine(34) in tRNA + phosphate. Involved in the post-transcriptional modification of the uridine at the wobble position (U34) of tRNA(Lys), tRNA(Glu) and tRNA(Gln). Catalyzes the conversion of 2-thiouridine (S2U-RNA) to 2-selenouridine (Se2U-RNA). Acts in a two-step process involving geranylation of 2-thiouridine (S2U) to S-geranyl-2-thiouridine (geS2U) and subsequent selenation of the latter derivative to 2-selenouridine (Se2U) in the tRNA chain. In Cupriavidus pinatubonensis (strain JMP 134 / LMG 1197) (Cupriavidus necator (strain JMP 134)), this protein is tRNA 2-selenouridine synthase.